Consider the following 952-residue polypeptide: Calsyntenin-1 (952 aa).

An N-terminal signal peptide occupies residues 1-28 (MLRRPAPALARAVRLLLAGLLYGGGVWA). Residues 29 to 830 (ARVNKHKPWL…PHPFAVVPST (802 aa)) lie on the Extracellular side of the membrane. Cadherin domains are found at residues 38–154 (LEPT…APVF) and 155–255 (KEKS…SPGW). Asparagine 356 carries an N-linked (GlcNAc...) asparagine glycan. The chain crosses the membrane as a helical span at residues 831–851 (ATVVIVVCVSFLVFMIILGVF). At 852–952 (RIRAAHQRTM…LEWDYSTLSY (101 aa)) the chain is on the cytoplasmic side. The interval 886–952 (METYEDQHSS…LEWDYSTLSY (67 aa)) is disordered. A compositionally biased stretch (acidic residues) spans 896–930 (EEEEEEEEEEESEDGEEEEDITSAESESSEEEEGG). Residues 934-952 (GQNTTRQQQLEWDYSTLSY) show a composition bias toward polar residues.

It belongs to the calsyntenin family. In terms of assembly, directly interacts with APBA2. Forms a tripartite complex with APBA2 and APP. Interacts with KLC1. Interacts with APBB1; this interaction stabilizes AlcICD metabolism. As to quaternary structure, interacts with PSEN1. Proteolytically processed under normal cellular conditions. A primary zeta-cleavage generates a large extracellular (soluble) N-terminal domain (sAlc) and a short C-terminal transmembrane fragment (CTF1). A secondary cleavage catalyzed by presenilin gamma-secretase within the transmembrane domain releases the beta-Alc-alpha chain in the extracellular milieu and produces an intracellular fragment (AlcICD). This processing is strongly suppressed in the tripartite complex formed with APBA2 and APP, which seems to prevent the association with PSEN1. Preferentially expressed in the retina and brain.

It localises to the postsynaptic cell membrane. It is found in the endoplasmic reticulum membrane. Its subcellular location is the golgi apparatus membrane. The protein localises to the cell projection. The protein resides in the neuron projection. It localises to the nucleus. Postsynaptic adhesion molecule that binds to presynaptic neurexins to mediate both excitatory and inhibitory synapse formation. Promotes synapse development by acting as a cell adhesion molecule at the postsynaptic membrane, which associates with neurexin-alpha at the presynaptic membrane. Also functions as a cargo in axonal anterograde transport by acting as a molecular adapter that promotes KLC1 association with vesicles. Complex formation with APBA2 and APP, stabilizes APP metabolism and enhances APBA2-mediated suppression of beta-APP40 secretion, due to the retardation of intracellular APP maturation. Its function is as follows. As intracellular fragment AlcICD, suppresses APBB1-dependent transactivation stimulated by APP C-terminal intracellular fragment (AICD), most probably by competing with AICD for APBB1-binding. Functionally, in complex with APBA2 and C99, a C-terminal APP fragment, abolishes C99 interaction with PSEN1 and thus APP C99 cleavage by gamma-secretase, most probably through stabilization of the direct interaction between APBA2 and APP. This chain is Calsyntenin-1 (Clstn1), found in Rattus norvegicus (Rat).